The chain runs to 66 residues: DNA-directed RNA polymerase subunit Rpo10 (66 aa).

Positions 7, 10, 47, and 48 each coordinate Zn(2+).

The protein belongs to the archaeal Rpo10/eukaryotic RPB10 RNA polymerase subunit family. As to quaternary structure, part of the RNA polymerase complex. Zn(2+) is required as a cofactor.

It localises to the cytoplasm. It carries out the reaction RNA(n) + a ribonucleoside 5'-triphosphate = RNA(n+1) + diphosphate. Functionally, DNA-dependent RNA polymerase (RNAP) catalyzes the transcription of DNA into RNA using the four ribonucleoside triphosphates as substrates. This is DNA-directed RNA polymerase subunit Rpo10 from Halobacterium salinarum (strain ATCC 29341 / DSM 671 / R1).